The primary structure comprises 131 residues: EG45-like domain containing protein (131 aa).

The first 24 residues, 1–24 (MGVGTKVLVITTMAICLISSAAYA), serve as a signal peptide directing secretion. Positions 27 to 131 (GTATFYTPPY…GKIKIEFNQA (105 aa)) constitute an Expansin-like EG45; incomplete domain. Cys-73 and Cys-85 are joined by a disulfide.

Expressed in the outer layer of xylem and the vascular cambial zone of roots, in shoot cambium, but not in leaves.

Its subcellular location is the secreted. In terms of biological role, might have a systemic role in water and solute homeostasis. Has no expansin-like activity. The chain is EG45-like domain containing protein (CjBAp12) from Citrus jambhiri (Rough lemon).